We begin with the raw amino-acid sequence, 309 residues long: Ribonuclease H2 subunit B (309 aa).

Position 2 is an N-acetylalanine (Ala2). Lys295 is modified (N6-acetyllysine). Position 296 is a phosphoserine (Ser296).

Belongs to the RNase H2 subunit B family. The RNase H2 complex is a heterotrimer composed of the catalytic subunit RNASEH2A and the non-catalytic subunits RNASEH2B and RNASEH2C.

It localises to the nucleus. Its function is as follows. Non catalytic subunit of RNase H2, an endonuclease that specifically degrades the RNA of RNA:DNA hybrids. Participates in DNA replication, possibly by mediating the removal of lagging-strand Okazaki fragment RNA primers during DNA replication. Mediates the excision of single ribonucleotides from DNA:RNA duplexes. In Bos taurus (Bovine), this protein is Ribonuclease H2 subunit B (RNASEH2B).